The chain runs to 287 residues: Phosphatidylserine decarboxylase proenzyme (287 aa).

Active-site charge relay system; for autoendoproteolytic cleavage activity residues include aspartate 90, histidine 147, and serine 252. Serine 252 acts as the Schiff-base intermediate with substrate; via pyruvic acid; for decarboxylase activity in catalysis. Residue serine 252 is modified to Pyruvic acid (Ser); by autocatalysis.

The protein belongs to the phosphatidylserine decarboxylase family. PSD-B subfamily. Prokaryotic type I sub-subfamily. As to quaternary structure, heterodimer of a large membrane-associated beta subunit and a small pyruvoyl-containing alpha subunit. Pyruvate serves as cofactor. In terms of processing, is synthesized initially as an inactive proenzyme. Formation of the active enzyme involves a self-maturation process in which the active site pyruvoyl group is generated from an internal serine residue via an autocatalytic post-translational modification. Two non-identical subunits are generated from the proenzyme in this reaction, and the pyruvate is formed at the N-terminus of the alpha chain, which is derived from the carboxyl end of the proenzyme. The autoendoproteolytic cleavage occurs by a canonical serine protease mechanism, in which the side chain hydroxyl group of the serine supplies its oxygen atom to form the C-terminus of the beta chain, while the remainder of the serine residue undergoes an oxidative deamination to produce ammonia and the pyruvoyl prosthetic group on the alpha chain. During this reaction, the Ser that is part of the protease active site of the proenzyme becomes the pyruvoyl prosthetic group, which constitutes an essential element of the active site of the mature decarboxylase.

It localises to the cell membrane. The enzyme catalyses a 1,2-diacyl-sn-glycero-3-phospho-L-serine + H(+) = a 1,2-diacyl-sn-glycero-3-phosphoethanolamine + CO2. It functions in the pathway phospholipid metabolism; phosphatidylethanolamine biosynthesis; phosphatidylethanolamine from CDP-diacylglycerol: step 2/2. Catalyzes the formation of phosphatidylethanolamine (PtdEtn) from phosphatidylserine (PtdSer). The sequence is that of Phosphatidylserine decarboxylase proenzyme from Pseudomonas putida (strain ATCC 47054 / DSM 6125 / CFBP 8728 / NCIMB 11950 / KT2440).